Here is a 635-residue protein sequence, read N- to C-terminus: Sulfite reductase [ferredoxin], chloroplastic (635 aa).

The transit peptide at 1 to 50 directs the protein to the chloroplast; that stretch reads MSGAIGGAEVHGFRGAAAQLPRSRVLGRPIRVAPPAAARPGGASAGSIRA. 2 disordered regions span residues 31–50 and 245–267; these read RVAPPAAARPGGASAGSIRA and PEVTKARNDNSHGTNFPDSPEPI. The segment covering 245–254 has biased composition (basic and acidic residues); the sequence is PEVTKARNDN. 4 residues coordinate [4Fe-4S] cluster: cysteine 494, cysteine 500, cysteine 540, and cysteine 544. Residue cysteine 544 coordinates siroheme.

Belongs to the nitrite and sulfite reductase 4Fe-4S domain family. As to quaternary structure, monomer. Interacts with ferredoxin. The cofactor is siroheme. It depends on [4Fe-4S] cluster as a cofactor. In terms of processing, phosphorylated; this phosphorylation reduces DNA-binding. In terms of tissue distribution, present in roots and leaves (at protein level). In leaves, sulfite reductase activity is detected in both bundle sheath and mesophyll cell types.

The protein resides in the plastid. Its subcellular location is the chloroplast stroma. The protein localises to the chloroplast nucleoid. It is found in the plastid stroma. The enzyme catalyses hydrogen sulfide + 6 oxidized [2Fe-2S]-[ferredoxin] + 3 H2O = sulfite + 6 reduced [2Fe-2S]-[ferredoxin] + 7 H(+). Its activity is regulated as follows. Inhibited by the tryptophan-modifying reagent, N-bromosuccinimide (NBS), by the lysine-modifying reagent, N-acetylsuccinimide and by the arginine-modifying reagent, phenylglyoxal. Complex formation with ferredoxin prevents these inhibitions. In terms of biological role, essential protein with sulfite reductase activity required in assimilatory sulfate reduction pathway during both primary and secondary metabolism and thus involved in development and growth. Functionally, DNA-binding protein that binds to both double-stranded and single-stranded DNA without significant sequence specificity to reversibly repress the transcriptional activity of chloroplast nucleoids by promoting DNA compaction and possibly regulate DNA replication. The chain is Sulfite reductase [ferredoxin], chloroplastic (SIR) from Zea mays (Maize).